The chain runs to 159 residues: Lipoprotein signal peptidase (159 aa).

A run of 3 helical transmembrane segments spans residues 4–24, 64–84, and 88–108; these read PYFV…DQVT, MSFF…FYIK, and GNFL…GNFI. Catalysis depends on residues Asp-118 and Asp-136. Residues 131–151 traverse the membrane as a helical segment; that stretch reads IFNGADSSLTIGVILVLIALL.

It belongs to the peptidase A8 family.

It localises to the cell membrane. The catalysed reaction is Release of signal peptides from bacterial membrane prolipoproteins. Hydrolyzes -Xaa-Yaa-Zaa-|-(S,diacylglyceryl)Cys-, in which Xaa is hydrophobic (preferably Leu), and Yaa (Ala or Ser) and Zaa (Gly or Ala) have small, neutral side chains.. The protein operates within protein modification; lipoprotein biosynthesis (signal peptide cleavage). This protein specifically catalyzes the removal of signal peptides from prolipoproteins. In Staphylococcus carnosus (strain TM300), this protein is Lipoprotein signal peptidase.